Consider the following 507-residue polypeptide: Nucleoporin p54 (507 aa).

9 repeat units span residues 5–6 (FG), 25–26 (FG), 28–29 (FG), 53–54 (FG), 61–62 (FG), 63–64 (FG), 67–68 (FG), 87–88 (FG), and 444–445 (FG). A 9 X 2 AA repeats of F-G region spans residues 5–445 (FGAPSGTSGT…SQIRMQNHFG (441 aa)).

It belongs to the NUP54 family. As to quaternary structure, component of the p62 complex, a complex composed of NUP62, NUP54, and the isoform p58 and isoform p45 of NUP58. Interacts with NUTF2. O-glycosylated.

It localises to the nucleus. Its subcellular location is the nuclear pore complex. The protein resides in the nucleus membrane. Functionally, component of the nuclear pore complex, a complex required for the trafficking across the nuclear membrane. In Homo sapiens (Human), this protein is Nucleoporin p54 (NUP54).